The following is a 188-amino-acid chain: Elongation factor P 1 (188 aa).

This sequence belongs to the elongation factor P family.

The protein resides in the cytoplasm. It participates in protein biosynthesis; polypeptide chain elongation. Involved in peptide bond synthesis. Stimulates efficient translation and peptide-bond synthesis on native or reconstituted 70S ribosomes in vitro. Probably functions indirectly by altering the affinity of the ribosome for aminoacyl-tRNA, thus increasing their reactivity as acceptors for peptidyl transferase. The chain is Elongation factor P 1 from Mesorhizobium japonicum (strain LMG 29417 / CECT 9101 / MAFF 303099) (Mesorhizobium loti (strain MAFF 303099)).